The sequence spans 218 residues: GTP cyclohydrolase 1 (218 aa).

Zn(2+) contacts are provided by Cys109, His112, and Cys180.

It belongs to the GTP cyclohydrolase I family. In terms of assembly, toroid-shaped homodecamer, composed of two pentamers of five dimers.

It carries out the reaction GTP + H2O = 7,8-dihydroneopterin 3'-triphosphate + formate + H(+). Its pathway is cofactor biosynthesis; 7,8-dihydroneopterin triphosphate biosynthesis; 7,8-dihydroneopterin triphosphate from GTP: step 1/1. This is GTP cyclohydrolase 1 from Actinobacillus pleuropneumoniae serotype 5b (strain L20).